A 545-amino-acid polypeptide reads, in one-letter code: Transducer protein Htr7 (545 aa).

3 consecutive transmembrane segments (helical) span residues 10–30 (AVVAPLGDAVGAIGFGAAAAL), 44–64 (FWMAFTFASLLGVTWTVSLML), and 80–100 (PLMATTVAVFAIGGTATLAIV). A disordered region spans residues 111–157 (AQRRQEAEEERAEAERAREKAEQKQAEAERQTAEAESAKQDARERSA). Over residues 123–157 (EAERAREKAEQKQAEAERQTAEAESAKQDARERSA) the composition is skewed to basic and acidic residues. The region spanning 164–217 (ADLESQATEVGATLEAASDGDLTARVDATTDNAEIAEVATVVNDMLTTMERTID) is the HAMP domain. Residues 236 to 476 (GAKEIQDASQ…RVVSSVDDIA (241 aa)) enclose the Methyl-accepting transducer domain. The residue at position 281 (E281) is a Glutamate methyl ester (Glu). A disordered region spans residues 521–545 (LNEFRTEATGTAHGEATDAPAGQSD). A compositionally biased stretch (low complexity) spans 527 to 539 (EATGTAHGEATDA).

This sequence belongs to the methyl-accepting chemotaxis (MCP) protein family. Post-translationally, methylated by CheR.

It localises to the cell membrane. In terms of biological role, potentially involved in chemo- or phototactic signal transduction. This is Transducer protein Htr7 (htr7) from Halobacterium salinarum (strain ATCC 29341 / DSM 671 / R1).